Reading from the N-terminus, the 334-residue chain is Broad-range acid phosphatase DET1 (334 aa).

Catalysis depends on histidine 32, which acts as the Tele-phosphohistidine intermediate. Residues asparagine 38, 44 to 45, and arginine 108 each bind substrate; that span reads NG. The active-site Proton donor/acceptor is glutamate 126. Residues 168–171 and 195–205 each bind substrate; these read LNNT and RVKDEPRIREQ. Serine 248 is subject to Phosphoserine.

Belongs to the phosphoglycerate mutase family.

It localises to the cytoplasm. The protein resides in the nucleus. Metal-independent, broad-range acid phosphatase. Involved, either directly or indirectly, in the bidirectional transport of sterols between the endoplasmic reticulum and the plasma membrane. In Saccharomyces cerevisiae (strain ATCC 204508 / S288c) (Baker's yeast), this protein is Broad-range acid phosphatase DET1 (DET1).